An 89-amino-acid chain; its full sequence is Small ribosomal subunit protein uS15 (89 aa).

The protein belongs to the universal ribosomal protein uS15 family. Part of the 30S ribosomal subunit. Forms a bridge to the 50S subunit in the 70S ribosome, contacting the 23S rRNA.

In terms of biological role, one of the primary rRNA binding proteins, it binds directly to 16S rRNA where it helps nucleate assembly of the platform of the 30S subunit by binding and bridging several RNA helices of the 16S rRNA. Forms an intersubunit bridge (bridge B4) with the 23S rRNA of the 50S subunit in the ribosome. The protein is Small ribosomal subunit protein uS15 of Corynebacterium aurimucosum (strain ATCC 700975 / DSM 44827 / CIP 107346 / CN-1) (Corynebacterium nigricans).